Here is a 155-residue protein sequence, read N- to C-terminus: SsrA-binding protein (155 aa).

The protein belongs to the SmpB family.

It is found in the cytoplasm. Functionally, required for rescue of stalled ribosomes mediated by trans-translation. Binds to transfer-messenger RNA (tmRNA), required for stable association of tmRNA with ribosomes. tmRNA and SmpB together mimic tRNA shape, replacing the anticodon stem-loop with SmpB. tmRNA is encoded by the ssrA gene; the 2 termini fold to resemble tRNA(Ala) and it encodes a 'tag peptide', a short internal open reading frame. During trans-translation Ala-aminoacylated tmRNA acts like a tRNA, entering the A-site of stalled ribosomes, displacing the stalled mRNA. The ribosome then switches to translate the ORF on the tmRNA; the nascent peptide is terminated with the 'tag peptide' encoded by the tmRNA and targeted for degradation. The ribosome is freed to recommence translation, which seems to be the essential function of trans-translation. This Bacillus cereus (strain B4264) protein is SsrA-binding protein.